We begin with the raw amino-acid sequence, 200 residues long: Protein GrpE (200 aa).

Residues 1 to 11 (MTDNDGQKDFS) are compositionally biased toward basic and acidic residues. The tract at residues 1-43 (MTDNDGQKDFSEAAAENAGSKPGEPRVSKPYIMPDDPEETPSE) is disordered.

It belongs to the GrpE family. In terms of assembly, homodimer.

It localises to the cytoplasm. In terms of biological role, participates actively in the response to hyperosmotic and heat shock by preventing the aggregation of stress-denatured proteins, in association with DnaK and GrpE. It is the nucleotide exchange factor for DnaK and may function as a thermosensor. Unfolded proteins bind initially to DnaJ; upon interaction with the DnaJ-bound protein, DnaK hydrolyzes its bound ATP, resulting in the formation of a stable complex. GrpE releases ADP from DnaK; ATP binding to DnaK triggers the release of the substrate protein, thus completing the reaction cycle. Several rounds of ATP-dependent interactions between DnaJ, DnaK and GrpE are required for fully efficient folding. This is Protein GrpE from Afipia carboxidovorans (strain ATCC 49405 / DSM 1227 / KCTC 32145 / OM5) (Oligotropha carboxidovorans).